The chain runs to 179 residues: MGKQQETILIIGAGISGLATSRLLTNNGIPNIVFEASTPDRSQGFAISLQEFGYSTLLAALGDLPLSSLIRAVAPDRQIGGTGWIDQALRDNRTGELLVAPDLTTTKQTIVRANRNALRHWIADCGEDELDVRYGHKLQSIKGKLGDVTAIFENGAKYKGSLIIAADGVNSTYSPRRGS.

The signal sequence occupies residues 1 to 21 (MGKQQETILIIGAGISGLATS). Positions 35 and 46 each coordinate FAD. N-linked (GlcNAc...) asparagine glycosylation is present at N92. R119 serves as a coordination point for FAD. An N-linked (GlcNAc...) asparagine glycan is attached at N170.

It belongs to the paxM FAD-dependent monooxygenase family. FAD is required as a cofactor.

It functions in the pathway secondary metabolite biosynthesis. Functionally, FAD-dependent monooxygenase; part of the gene cluster that mediates the biosynthesis of neosartoricin B, a prenylated anthracenone that probably exhibits T-cell antiproliferative activity, suggestive of a physiological role as an immunosuppressive agent. The non-reducing polyketide synthase nscA probably synthesizes and cyclizes the decaketide backbone. The hydrolase nscB then mediates the product release through hydrolysis followed by spontaneous decarboxylation. The prenyltransferase nscD catalyzes the addition of the dimethylallyl group to the aromatic C5. The FAD-dependent monooxygenase nscC is then responsible for the stereospecific hydroxylation at C2. Neosartoricin B can be converted into two additional compounds neosartoricins C and D. Neosartoricin C is a spirocyclic compound that is cyclized through the attack of C3 hydroxyl on C14, followed by dehydration. On the other hand, neosartoricin D is a further cyclized compound in which attack of C2 on C14 in neosartoricin C results in the formation of the acetal-containing dioxabicyclo-octanone ring. Both of these compounds are novel and possibly represent related metabolites of the gene cluster. In Trichophyton equinum (strain ATCC MYA-4606 / CBS 127.97) (Horse ringworm fungus), this protein is FAD-dependent monooxygenase nscC.